The chain runs to 344 residues: Arginine N-succinyltransferase (344 aa).

Position 125 (Leu-125) interacts with succinyl-CoA. His-229 serves as the catalytic Proton donor.

This sequence belongs to the arginine N-succinyltransferase family.

The enzyme catalyses succinyl-CoA + L-arginine = N(2)-succinyl-L-arginine + CoA + H(+). It participates in amino-acid degradation; L-arginine degradation via AST pathway; L-glutamate and succinate from L-arginine: step 1/5. Functionally, catalyzes the transfer of succinyl-CoA to arginine to produce N(2)-succinylarginine. In Shigella boydii serotype 18 (strain CDC 3083-94 / BS512), this protein is Arginine N-succinyltransferase.